We begin with the raw amino-acid sequence, 504 residues long: Glutamate--tRNA ligase (504 aa).

A 'HIGH' region motif is present at residues 10–20 (PSPTGDPHVGT). The 'KMSKS' region signature appears at 251 to 255 (KLSKR). An ATP-binding site is contributed by Lys-254.

The protein belongs to the class-I aminoacyl-tRNA synthetase family. Glutamate--tRNA ligase type 1 subfamily. Monomer.

The protein resides in the cytoplasm. The catalysed reaction is tRNA(Glu) + L-glutamate + ATP = L-glutamyl-tRNA(Glu) + AMP + diphosphate. Catalyzes the attachment of glutamate to tRNA(Glu) in a two-step reaction: glutamate is first activated by ATP to form Glu-AMP and then transferred to the acceptor end of tRNA(Glu). The chain is Glutamate--tRNA ligase from Cellvibrio japonicus (strain Ueda107) (Pseudomonas fluorescens subsp. cellulosa).